The chain runs to 190 residues: NADH dehydrogenase [ubiquinone] iron-sulfur protein 3 (190 aa).

It belongs to the complex I 30 kDa subunit family. As to quaternary structure, complex I is composed of about 45 different subunits. This is a component of the iron-sulfur (IP) fragment of the enzyme.

It is found in the mitochondrion inner membrane. It catalyses the reaction a ubiquinone + NADH + 5 H(+)(in) = a ubiquinol + NAD(+) + 4 H(+)(out). Its function is as follows. Core subunit of the mitochondrial membrane respiratory chain NADH dehydrogenase (Complex I) that is believed to belong to the minimal assembly required for catalysis. Complex I functions in the transfer of electrons from NADH to the respiratory chain. The immediate electron acceptor for the enzyme is believed to be ubiquinone. In Solanum tuberosum (Potato), this protein is NADH dehydrogenase [ubiquinone] iron-sulfur protein 3 (NAD9).